A 101-amino-acid chain; its full sequence is Phosphoribosyl-AMP cyclohydrolase (101 aa).

Residue Asp-71 participates in Mg(2+) binding. Cys-72 serves as a coordination point for Zn(2+). Residues Asp-73 and Asp-75 each contribute to the Mg(2+) site. Zn(2+) is bound by residues Cys-88 and Cys-95.

The protein belongs to the PRA-CH family. As to quaternary structure, homodimer. It depends on Mg(2+) as a cofactor. Zn(2+) serves as cofactor.

Its subcellular location is the cytoplasm. The enzyme catalyses 1-(5-phospho-beta-D-ribosyl)-5'-AMP + H2O = 1-(5-phospho-beta-D-ribosyl)-5-[(5-phospho-beta-D-ribosylamino)methylideneamino]imidazole-4-carboxamide. Its pathway is amino-acid biosynthesis; L-histidine biosynthesis; L-histidine from 5-phospho-alpha-D-ribose 1-diphosphate: step 3/9. Functionally, catalyzes the hydrolysis of the adenine ring of phosphoribosyl-AMP. The sequence is that of Phosphoribosyl-AMP cyclohydrolase from Bacillus cereus (strain AH820).